Here is a 271-residue protein sequence, read N- to C-terminus: Indole-3-glycerol phosphate synthase (271 aa).

It belongs to the TrpC family.

It catalyses the reaction 1-(2-carboxyphenylamino)-1-deoxy-D-ribulose 5-phosphate + H(+) = (1S,2R)-1-C-(indol-3-yl)glycerol 3-phosphate + CO2 + H2O. It functions in the pathway amino-acid biosynthesis; L-tryptophan biosynthesis; L-tryptophan from chorismate: step 4/5. The sequence is that of Indole-3-glycerol phosphate synthase from Haloarcula marismortui (strain ATCC 43049 / DSM 3752 / JCM 8966 / VKM B-1809) (Halobacterium marismortui).